The sequence spans 94 residues: Large ribosomal subunit protein uL23cz (94 aa).

Belongs to the universal ribosomal protein uL23 family. Part of the 50S ribosomal subunit.

The protein resides in the plastid. The protein localises to the chloroplast. Its function is as follows. Binds to 23S rRNA. The sequence is that of Large ribosomal subunit protein uL23cz (rpl23-A) from Agrostis stolonifera (Creeping bentgrass).